We begin with the raw amino-acid sequence, 304 residues long: Ribosomal RNA large subunit methyltransferase F (304 aa).

Belongs to the methyltransferase superfamily. METTL16/RlmF family.

It is found in the cytoplasm. It carries out the reaction adenosine(1618) in 23S rRNA + S-adenosyl-L-methionine = N(6)-methyladenosine(1618) in 23S rRNA + S-adenosyl-L-homocysteine + H(+). Specifically methylates the adenine in position 1618 of 23S rRNA. The polypeptide is Ribosomal RNA large subunit methyltransferase F (Klebsiella pneumoniae (strain 342)).